Consider the following 520-residue polypeptide: Cryptochrome DASH (520 aa).

Positions 5-141 (RTVICLLRND…RVQTFWGSTL (137 aa)) constitute a Photolyase/cryptochrome alpha/beta domain. Positions 479 to 504 (SRHVNNKSSGPSSSKGRKGSSYTARQ) are disordered.

Belongs to the DNA photolyase class-1 family. FAD serves as cofactor. It depends on (6R)-5,10-methylene-5,6,7,8-tetrahydrofolate as a cofactor.

May have a photoreceptor function. Has weak cyclobutyl pyrimidine photolyase activity when expressed in E.coli and when tested in vitro. The sequence is that of Cryptochrome DASH (cry-dash) from Danio rerio (Zebrafish).